The chain runs to 338 residues: MVTQVGINGFGRIGRIVLRASLSNPEVQVVAINDPFIPLEYMVYMFKYDSVHGRFQGTVEAKDGKLVVNGKEISVFSERDPAQIPWGSVEAAYVVESTGVFTSIDAASAHLQGGAKKVIISAPSGDAPMFVCGVNLEKYTSDLKVISNASCTTNCLAPLAKVINDNFGIVEGLMTTVHATTATQKTVDGPSNKDWRGGRGAGANIIPSSTGAAKAVGKVIPELNGKLTGMAFRVPTPDVSVVDLTVRLEKGATYEEIKAVIKKASENELKGILGYTNDQVVSTDFVGDAQSSIFDAAAGIALNDKFVKLVSWYDNEFGYSNRVIDLLAYAAKVDAAAQ.

Residues 12–13, Asp-34, and Arg-79 each bind NAD(+); that span reads RI. Residues 150–152, Thr-181, 210–211, and Arg-233 contribute to the D-glyceraldehyde 3-phosphate site; these read SCT and TG. Cys-151 functions as the Nucleophile in the catalytic mechanism. Asn-315 provides a ligand contact to NAD(+).

The protein belongs to the glyceraldehyde-3-phosphate dehydrogenase family. Homotetramer.

The protein resides in the cytoplasm. It carries out the reaction D-glyceraldehyde 3-phosphate + phosphate + NAD(+) = (2R)-3-phospho-glyceroyl phosphate + NADH + H(+). It functions in the pathway carbohydrate degradation; glycolysis; pyruvate from D-glyceraldehyde 3-phosphate: step 1/5. The chain is Glyceraldehyde-3-phosphate dehydrogenase 2 (GPD2) from Mucor circinelloides f. lusitanicus (Mucor racemosus var. lusitanicus).